The sequence spans 245 residues: 5-oxoprolinase subunit A (245 aa).

It belongs to the LamB/PxpA family. Forms a complex composed of PxpA, PxpB and PxpC.

It carries out the reaction 5-oxo-L-proline + ATP + 2 H2O = L-glutamate + ADP + phosphate + H(+). Functionally, catalyzes the cleavage of 5-oxoproline to form L-glutamate coupled to the hydrolysis of ATP to ADP and inorganic phosphate. This Erwinia tasmaniensis (strain DSM 17950 / CFBP 7177 / CIP 109463 / NCPPB 4357 / Et1/99) protein is 5-oxoprolinase subunit A.